The primary structure comprises 363 residues: Flagellar P-ring protein (363 aa).

The signal sequence occupies residues 1–20 (MKLKLILAVAMLAFSLPSQA).

Belongs to the FlgI family. In terms of assembly, the basal body constitutes a major portion of the flagellar organelle and consists of four rings (L,P,S, and M) mounted on a central rod.

Its subcellular location is the periplasm. It localises to the bacterial flagellum basal body. In terms of biological role, assembles around the rod to form the L-ring and probably protects the motor/basal body from shearing forces during rotation. The chain is Flagellar P-ring protein from Shewanella sp. (strain MR-4).